The following is a 380-amino-acid chain: E3 ubiquitin-protein ligase RNF13 (380 aa).

The first 34 residues, 1 to 34, serve as a signal peptide directing secretion; sequence MLLSIGMLMLSATQVYTILTVQLFAFLNLLPVEA. Topologically, residues 35–182 are lumenal; that stretch reads DILAYNFENA…VPEFSLPLEY (148 aa). A PA domain is found at 65–160; it reads KGFLINSKPE…GESSANSLKD (96 aa). N-linked (GlcNAc...) asparagine glycosylation is present at Asn-88. A helical transmembrane segment spans residues 183-203; that stretch reads YLIPFLIIVGICLILIVIFMI. The Cytoplasmic segment spans residues 204–380; the sequence is TKFVQDRHRA…ERDYNIANTV (177 aa). The RING-type; atypical zinc finger occupies 240-282; it reads CAICLDEYEDGDKLRILPCSHAYHCKCVDPWLTKTKKTCPVCK. The interval 285 to 380 is disordered; that stretch reads VVPSQGDSDS…ERDYNIANTV (96 aa). Acidic residues-rich tracts occupy residues 292 to 304 and 339 to 356; these read SDSD…EENE and SDYE…AENE.

As to quaternary structure, interacts with ERN1. Post-translationally, autoubiquitinated.

The protein localises to the endoplasmic reticulum membrane. The protein resides in the late endosome membrane. Its subcellular location is the lysosome membrane. It is found in the nucleus inner membrane. It carries out the reaction S-ubiquitinyl-[E2 ubiquitin-conjugating enzyme]-L-cysteine + [acceptor protein]-L-lysine = [E2 ubiquitin-conjugating enzyme]-L-cysteine + N(6)-ubiquitinyl-[acceptor protein]-L-lysine.. The protein operates within protein modification; protein ubiquitination. E3 ubiquitin-protein ligase that regulates cell proliferation. Involved in apoptosis regulation. Mediates ER stress-induced activation of JNK signaling pathway and apoptosis by promoting ERN1 activation and splicing of XBP1 mRNA. Also involved in protein trafficking and localization. In Bos taurus (Bovine), this protein is E3 ubiquitin-protein ligase RNF13 (RNF13).